Reading from the N-terminus, the 95-residue chain is Co-chaperonin GroES (95 aa).

The protein belongs to the GroES chaperonin family. As to quaternary structure, heptamer of 7 subunits arranged in a ring. Interacts with the chaperonin GroEL.

The protein localises to the cytoplasm. In terms of biological role, together with the chaperonin GroEL, plays an essential role in assisting protein folding. The GroEL-GroES system forms a nano-cage that allows encapsulation of the non-native substrate proteins and provides a physical environment optimized to promote and accelerate protein folding. GroES binds to the apical surface of the GroEL ring, thereby capping the opening of the GroEL channel. In Stenotrophomonas maltophilia (strain R551-3), this protein is Co-chaperonin GroES.